The primary structure comprises 307 residues: tRNA dimethylallyltransferase 2 (307 aa).

Position 9 to 16 (9 to 16 (GPTAVGKT)) interacts with ATP. 11-16 (TAVGKT) is a binding site for substrate. An interaction with substrate tRNA region spans residues 34–37 (DSRQ).

The protein belongs to the IPP transferase family. Monomer. Mg(2+) is required as a cofactor.

It carries out the reaction adenosine(37) in tRNA + dimethylallyl diphosphate = N(6)-dimethylallyladenosine(37) in tRNA + diphosphate. Catalyzes the transfer of a dimethylallyl group onto the adenine at position 37 in tRNAs that read codons beginning with uridine, leading to the formation of N6-(dimethylallyl)adenosine (i(6)A). This is tRNA dimethylallyltransferase 2 from Azobacteroides pseudotrichonymphae genomovar. CFP2.